The following is a 65-amino-acid chain: uncharacterized protein (65 aa).

A run of 2 helical transmembrane segments spans residues 4–24 (TIWL…MLYP) and 45–65 (FGGG…KTIG).

It localises to the cell membrane. This is an uncharacterized protein from Escherichia coli O157:H7.